Reading from the N-terminus, the 208-residue chain is Adenylyl-sulfate kinase 3 (208 aa).

37 to 45 (GLSGSGKST) contacts ATP. Residues Asp-67, Arg-70, Arg-84, Asn-87, 110-111 (IS), and Gly-160 contribute to the substrate site. Ser-111 serves as the catalytic Phosphoserine intermediate.

It belongs to the APS kinase family. In terms of tissue distribution, expressed in root vasculature, root tips, leaf epidermal and guard cells, pollen grains and radicle of immature seeds.

It localises to the cytoplasm. The protein localises to the cytosol. The catalysed reaction is adenosine 5'-phosphosulfate + ATP = 3'-phosphoadenylyl sulfate + ADP + H(+). The protein operates within sulfur metabolism; hydrogen sulfide biosynthesis; sulfite from sulfate: step 2/3. Its function is as follows. Catalyzes the synthesis of activated sulfate for the sulfation of secondary metabolites, including the glucosinolates. Essential for plant reproduction and viability. In Arabidopsis thaliana (Mouse-ear cress), this protein is Adenylyl-sulfate kinase 3.